A 219-amino-acid chain; its full sequence is Dynein light chain Tctex-type 4 (219 aa).

The tract at residues 1–84 is disordered; the sequence is MAGRPVPAGR…RRPSLGPVPP (84 aa). Residues 10–20 are compositionally biased toward basic and acidic residues; it reads RQEEELAKDPG. Ser64 is subject to Phosphoserine.

This sequence belongs to the dynein light chain Tctex-type family. In terms of assembly, interacts with ENG/endoglin, TGFBR2 and TGFBR3. Interacts with PPP1CC.

It localises to the cell projection. The protein localises to the cilium. It is found in the flagellum. Its subcellular location is the cytoplasmic vesicle. The protein resides in the secretory vesicle. It localises to the acrosome. The protein localises to the cytoplasm. It is found in the cytoskeleton. Its subcellular location is the cilium axoneme. The protein resides in the nucleus. It localises to the microtubule organizing center. This is Dynein light chain Tctex-type 4 (DYNLT4) from Sus scrofa (Pig).